The primary structure comprises 286 residues: Polyamine aminopropyltransferase (286 aa).

One can recognise a PABS domain in the interval 5 to 238 (TMWHETLHDQ…GIMTFAWATD (234 aa)). S-methyl-5'-thioadenosine is bound at residue Q33. Residues H64 and D88 each contribute to the spermidine site. S-methyl-5'-thioadenosine contacts are provided by residues E108 and 140–141 (DG). Catalysis depends on D158, which acts as the Proton acceptor. 158–161 (DCTD) serves as a coordination point for spermidine. P165 serves as a coordination point for S-methyl-5'-thioadenosine.

The protein belongs to the spermidine/spermine synthase family. Homodimer or homotetramer.

The protein localises to the cytoplasm. The enzyme catalyses S-adenosyl 3-(methylsulfanyl)propylamine + putrescine = S-methyl-5'-thioadenosine + spermidine + H(+). The protein operates within amine and polyamine biosynthesis; spermidine biosynthesis; spermidine from putrescine: step 1/1. Its function is as follows. Catalyzes the irreversible transfer of a propylamine group from the amino donor S-adenosylmethioninamine (decarboxy-AdoMet) to putrescine (1,4-diaminobutane) to yield spermidine. This chain is Polyamine aminopropyltransferase, found in Salmonella paratyphi A (strain ATCC 9150 / SARB42).